An 81-amino-acid polypeptide reads, in one-letter code: ATP synthase subunit c (81 aa).

The next 2 helical transmembrane spans lie at Ala7–Gly27 and Leu57–Ala77.

It belongs to the ATPase C chain family. As to quaternary structure, F-type ATPases have 2 components, F(1) - the catalytic core - and F(0) - the membrane proton channel. F(1) has five subunits: alpha(3), beta(3), gamma(1), delta(1), epsilon(1). F(0) has four main subunits: a(1), b(1), b'(1) and c(10-14). The alpha and beta chains form an alternating ring which encloses part of the gamma chain. F(1) is attached to F(0) by a central stalk formed by the gamma and epsilon chains, while a peripheral stalk is formed by the delta, b and b' chains.

Its subcellular location is the cellular thylakoid membrane. Its function is as follows. F(1)F(0) ATP synthase produces ATP from ADP in the presence of a proton or sodium gradient. F-type ATPases consist of two structural domains, F(1) containing the extramembraneous catalytic core and F(0) containing the membrane proton channel, linked together by a central stalk and a peripheral stalk. During catalysis, ATP synthesis in the catalytic domain of F(1) is coupled via a rotary mechanism of the central stalk subunits to proton translocation. Key component of the F(0) channel; it plays a direct role in translocation across the membrane. A homomeric c-ring of between 10-14 subunits forms the central stalk rotor element with the F(1) delta and epsilon subunits. This Synechococcus sp. (strain CC9311) protein is ATP synthase subunit c.